A 598-amino-acid polypeptide reads, in one-letter code: Fructan 6-exohydrolase (598 aa).

The N-terminal stretch at 1 to 30 (MAARLPLAACVVAFHLCLLLSSLVRSPSTA) is a signal peptide. The active site involves aspartate 65. 3 N-linked (GlcNAc...) asparagine glycosylation sites follow: asparagine 93, asparagine 288, and asparagine 351. An intrachain disulfide couples cysteine 451 to cysteine 497. N-linked (GlcNAc...) asparagine glycosylation occurs at asparagine 572.

This sequence belongs to the glycosyl hydrolase 32 family. As to expression, expressed in leaves, stems, roots and inflorescences. Maximum expression is detected in stems, particularly the penultimate internode.

The catalysed reaction is Hydrolysis of terminal, non-reducing (2-&gt;6)-linked beta-D-fructofuranose residues in fructans.. With respect to regulation, not inhibited by sucrose. Hydrolyzes levan-type beta-(2-&gt;6)-linked fructans to fructose, but not inulin-type beta-(2-&gt;1)-linked fructans. This is Fructan 6-exohydrolase from Triticum aestivum (Wheat).